The chain runs to 530 residues: RNA-binding protein 39 (530 aa).

The interval 1 to 146 is disordered; the sequence is MADDIDIEAM…PVREPIDNLT (146 aa). At Ala2 the chain carries N-acetylalanine. Positions 14-32 are enriched in basic and acidic residues; sequence PYKKDENKLNSANGHEERS. Basic residues-rich tracts occupy residues 33–56 and 64–95; these read KKRK…KERK and KKSK…RGRY. Tyr95 bears the Phosphotyrosine mark. 2 positions are modified to phosphoserine: Ser97 and Ser100. Residue Lys111 forms a Glycyl lysine isopeptide (Lys-Gly) (interchain with G-Cter in SUMO2) linkage. Ser117 bears the Phosphoserine mark. Lys119 is covalently cross-linked (Glycyl lysine isopeptide (Lys-Gly) (interchain with G-Cter in SUMO2)). Residues 119 to 130 show a composition bias toward basic residues; sequence KLSRRRSRSKSP. Residues Ser121 and Ser136 each carry the phosphoserine modification. The span at 131–146 shows a compositional bias: basic and acidic residues; it reads FRKDKSPVREPIDNLT. Thr146 bears the Phosphothreonine mark. Positions 153–230 constitute an RRM 1 domain; sequence RTVFCMQLAA…VPIIVQASQA (78 aa). Lys244 is covalently cross-linked (Glycyl lysine isopeptide (Lys-Gly) (interchain with G-Cter in SUMO2)). The RRM 2 domain maps to 250–328; it reads MRLYVGSLHF…RPMKVGHVTE (79 aa). The activating domain stretch occupies residues 291–355; sequence KGYGFITFSD…RTGIDLGTTG (65 aa). The interaction with JUN stretch occupies residues 291–406; that stretch reads KGYGFITFSD…IDLQTRLSQQ (116 aa). A phosphoserine mark is found at Ser334, Ser337, and Ser341. The interaction with ESR1 and ESR2 stretch occupies residues 355–406; the sequence is GRLQLMARLAEGTGLQIPPAAQQALQMSGSLAFGAVAEFSFVIDLQTRLSQQ. An interaction with NCOA6 region spans residues 406–530; that stretch reads QTEASALAAA…ATQLLVPSRR (125 aa). The RRM 3 domain maps to 445–508; that stretch reads EIKDDVIEEC…KMITAAYVPL (64 aa).

The protein belongs to the splicing factor SR family. As to quaternary structure, interacts with NCOA6 and JUN. Interacts with ESR1 and ESR2, in the presence of estradiol (E2). Interacts with RSRC1 (via Arg/Ser-rich domain). Interacts with SF3B1. Interacts with ZNF106 (via N-terminus).

It is found in the nucleus. RNA-binding protein that acts as a pre-mRNA splicing factor. Acts by promoting exon inclusion via regulation of exon cassette splicing. Also acts as a transcriptional coactivator for steroid nuclear receptors ESR1/ER-alpha and ESR2/ER-beta, and JUN/AP-1, independently of the pre-mRNA splicing factor activity. This is RNA-binding protein 39 (Rbm39) from Mus musculus (Mouse).